Reading from the N-terminus, the 584-residue chain is (+)-larreatricin hydroxylase, chloroplastic (584 aa).

Residues 1 to 32 (MASLSSQSKLLATPYSFPYHTKPSRVSLRRVS) constitute a chloroplast transit peptide. The N-terminal 47 residues, 33–79 (CKASNDNKDKPNDQEKTFSIDRRNMLIGLGGLYGASNVFPSNQSTLA), are a transit peptide targeting the thylakoid. Cystine bridges form between Cys-91–Cys-106 and Cys-105–Cys-168. 6 residues coordinate Cu cation: His-167, His-188, His-197, His-319, His-323, and His-353. The 2'-(S-cysteinyl)-histidine (Cys-His) cross-link spans 171-188 (CNGAYDQVGFPDVNIQVH). The propeptide at 432-584 (RLRSKATTTT…KIEFVRDEED (153 aa)) is removed in mature form.

Belongs to the tyrosinase family. Cu(2+) serves as cofactor.

The protein localises to the plastid. Its subcellular location is the chloroplast thylakoid lumen. The enzyme catalyses (+)-larreatricin + AH2 + O2 = (+)-3'-hydroxylarreatricin + A + H2O. Functionally, enantio-specific polyphenol oxidase involved in aromatic ring hydroxylation. Involved in the biosynthesis of the creosote bush 8-8' linked lignans. Has a strong preference for the 3' position of (+)-larreatricin. This chain is (+)-larreatricin hydroxylase, chloroplastic, found in Larrea tridentata (Creosote bush).